Here is a 109-residue protein sequence, read N- to C-terminus: SRA stem-loop-interacting RNA-binding protein, mitochondrial (109 aa).

Serine 15 is subject to Phosphoserine. Positions 19–103 constitute an RRM domain; it reads PVAFVRRIPW…RRPKLPQTSD (85 aa). Phosphothreonine is present on threonine 101. Residue serine 102 is modified to Phosphoserine.

Ubiquitously expressed, with highest level in heart, liver, skeletal muscle and testis.

The protein resides in the mitochondrion. Its subcellular location is the nucleus. Functionally, RNA-binding protein that acts as a nuclear receptor corepressor. Probably acts by binding the SRA RNA, and repressing the SRA-mediated nuclear receptor coactivation. Binds the STR7 loop of SRA RNA. Also able to repress glucocorticoid (GR), androgen (AR), thyroid (TR) and VDR-mediated transactivation. The chain is SRA stem-loop-interacting RNA-binding protein, mitochondrial (SLIRP) from Homo sapiens (Human).